Reading from the N-terminus, the 816-residue chain is Phosphatidylinositol 4-kinase beta (816 aa).

Residues 1–30 form a disordered region; the sequence is MGDTVVEPTPLKPTSESTPGPAGSNGGSLL. Gly2 is subject to N-acetylglycine. Residues 2–68 form an interaction with ACBD3 region; the sequence is GDTVVEPTPL…VKLLHGGVAI (67 aa). A PIK helical domain is found at 52–242; the sequence is CQEVLEKVKL…GTKLRKLILS (191 aa). The segment at 248-318 is disordered; sequence AHRKRELPSL…TESIDNSFSS (71 aa). A Phosphoserine modification is found at Ser258. A Phosphothreonine modification is found at Thr263. 5 positions are modified to phosphoserine: Ser266, Ser275, Ser277, Ser284, and Ser294. Polar residues-rich tracts occupy residues 278 to 297 and 306 to 318; these read DATA…SNPK and SSST…SFSS. Ser428 carries the post-translational modification Phosphoserine. Phosphothreonine is present on Thr438. Position 511 is a phosphoserine (Ser511). Phosphothreonine is present on residues Thr517 and Thr519. The region spanning 535 to 801 is the PI3K/PI4K catalytic domain; the sequence is EPWQEKVRRI…MVDGSMRSIT (267 aa). The segment at 541–547 is G-loop; the sequence is VRRIREG. Positions 668-676 are catalytic loop; sequence QVKDRHNGN. The segment at 687–711 is activation loop; that stretch reads HIDFGFILSSSPRNLGFETSAFKLT.

The protein belongs to the PI3/PI4-kinase family. Type III PI4K subfamily. As to quaternary structure, interacts with ARF1 and ARF3 in the Golgi complex, but not with ARF4, ARF5 or ARF6. Interacts with NCS1/FREQ in a calcium-independent manner. Interacts with CALN1/CABP8 and CALN2/CABP7; in a calcium-dependent manner; this interaction competes with NCS1/FREQ binding. Interacts with ACBD3. Interacts with ARMH3, YWHAB, YWHAE, YWHAG, YWHAH, YWHAQ, YWHAZ and SFN. Interacts with GGA2 (via VHS domain); the interaction is important for PI4KB location at the Golgi apparatus membrane. Interacts with ATG9A. It depends on Mg(2+) as a cofactor. Mn(2+) is required as a cofactor.

It localises to the endomembrane system. The protein resides in the mitochondrion outer membrane. The protein localises to the rough endoplasmic reticulum membrane. It is found in the golgi apparatus. Its subcellular location is the golgi apparatus membrane. It carries out the reaction a 1,2-diacyl-sn-glycero-3-phospho-(1D-myo-inositol) + ATP = a 1,2-diacyl-sn-glycero-3-phospho-(1D-myo-inositol 4-phosphate) + ADP + H(+). With respect to regulation, inhibited by wortmannin. Increased kinase activity upon interaction with NCS1/FREQ. Its function is as follows. Phosphorylates phosphatidylinositol (PI) in the first committed step in the production of the second messenger inositol-1,4,5,-trisphosphate (PIP). May regulate Golgi disintegration/reorganization during mitosis, possibly via its phosphorylation. Involved in Golgi-to-plasma membrane trafficking. May play an important role in the inner ear development. The sequence is that of Phosphatidylinositol 4-kinase beta (PI4KB) from Otolemur garnettii (Small-eared galago).